Consider the following 548-residue polypeptide: Chaperonin GroEL (548 aa).

Residues 30–33, Lys-51, 87–91, Gly-415, 479–481, and Asp-495 each bind ATP; these read TLGP, DGTTT, and NAA. The interval 526 to 548 is disordered; that stretch reads KEDKSSDLGSAPAGGMGGMGGMM. Residues 537–548 show a composition bias toward gly residues; sequence PAGGMGGMGGMM.

The protein belongs to the chaperonin (HSP60) family. In terms of assembly, forms a cylinder of 14 subunits composed of two heptameric rings stacked back-to-back. Interacts with the co-chaperonin GroES.

It localises to the cytoplasm. The catalysed reaction is ATP + H2O + a folded polypeptide = ADP + phosphate + an unfolded polypeptide.. In terms of biological role, together with its co-chaperonin GroES, plays an essential role in assisting protein folding. The GroEL-GroES system forms a nano-cage that allows encapsulation of the non-native substrate proteins and provides a physical environment optimized to promote and accelerate protein folding. The sequence is that of Chaperonin GroEL from Buchnera aphidicola subsp. Pterocomma populeum.